Reading from the N-terminus, the 735-residue chain is Ion-translocating oxidoreductase complex subunit C (735 aa).

4Fe-4S ferredoxin-type domains are found at residues M368–Y397 and K407–F436. C377, C380, C383, C387, C416, C419, C422, and C426 together coordinate [4Fe-4S] cluster. The interval A562–A713 is disordered.

This sequence belongs to the 4Fe4S bacterial-type ferredoxin family. RnfC subfamily. In terms of assembly, the complex is composed of six subunits: RsxA, RsxB, RsxC, RsxD, RsxE and RsxG. It depends on [4Fe-4S] cluster as a cofactor.

Its subcellular location is the cell inner membrane. Its function is as follows. Part of a membrane-bound complex that couples electron transfer with translocation of ions across the membrane. Required to maintain the reduced state of SoxR. The chain is Ion-translocating oxidoreductase complex subunit C from Salmonella newport (strain SL254).